Consider the following 261-residue polypeptide: Undecaprenyl-diphosphatase (261 aa).

Helical transmembrane passes span 9–31, 46–66, 80–100, 102–122, 137–157, 180–200, 209–229, and 240–260; these read ALLLGVVEGLTEFLPVSSTGHLT, FLKTFLVAIQLGAILAVLLLY, IAVAFVPTGVIGFLFYPLIKG, ILGNDAVVAFFLFFVGAVLLF, ALPLARVAWIGVFQGLAALFP, AEFSFLLALPTMFAAVGYDLW, GGWSLLLLGFLAALVTALVTV, and GFRPFALYRMALAAVYAFFFL.

This sequence belongs to the UppP family.

The protein resides in the cell inner membrane. The enzyme catalyses di-trans,octa-cis-undecaprenyl diphosphate + H2O = di-trans,octa-cis-undecaprenyl phosphate + phosphate + H(+). In terms of biological role, catalyzes the dephosphorylation of undecaprenyl diphosphate (UPP). Confers resistance to bacitracin. The polypeptide is Undecaprenyl-diphosphatase (Thermus thermophilus (strain ATCC 27634 / DSM 579 / HB8)).